The following is a 590-amino-acid chain: Polypeptide N-acetylgalactosaminyltransferase 8 (590 aa).

At 1–11 (MCLDIWRHKKK) the chain is on the cytoplasmic side. A helical; Signal-anchor for type II membrane protein transmembrane segment spans residues 12–31 (VLPLLLLMAIGSIIYYLYTL). The Lumenal portion of the chain corresponds to 32-590 (KLEGERDESA…QHFWDNVKTQ (559 aa)). N77 is a glycosylation site (N-linked (GlcNAc...) asparagine). 5 disulfides stabilise this stretch: C117/C345, C336/C419, C459/C475, C502/C517, and C546/C561. The catalytic subdomain A stretch occupies residues 127–236 (LPSVSVVITY…KGWLEPLIAP (110 aa)). Position 168 (D168) interacts with substrate. D220 serves as a coordination point for Mn(2+). Residue S221 participates in substrate binding. Residue H222 coordinates Mn(2+). N241 carries an N-linked (GlcNAc...) asparagine glycan. Positions 291–353 (PHKNPIMNGG…PCSRVGHLFR (63 aa)) are catalytic subdomain B. W322 contacts substrate. Mn(2+) is bound at residue H350. Residue R353 participates in substrate binding. A Ricin B-type lectin domain is found at 446–573 (ASGVLQSISS…KNHKQQWKFG (128 aa)).

The protein belongs to the glycosyltransferase 2 family. GalNAc-T subfamily. Mn(2+) is required as a cofactor. As to expression, expressed in developing oocytes and egg chambers. During embryonic stages 9-11, expressed in the primordium of the foregut, midgut and hindgut. During embryonic stages 12-13, expressed in the posterior midgut and hindgut. During embryonic stages 14-15, expression continues in the hindgut. No expression detected during embryonic stages 16-17 or in third instar larvae imaginal disks.

The protein localises to the golgi apparatus membrane. The enzyme catalyses L-seryl-[protein] + UDP-N-acetyl-alpha-D-galactosamine = a 3-O-[N-acetyl-alpha-D-galactosaminyl]-L-seryl-[protein] + UDP + H(+). It carries out the reaction L-threonyl-[protein] + UDP-N-acetyl-alpha-D-galactosamine = a 3-O-[N-acetyl-alpha-D-galactosaminyl]-L-threonyl-[protein] + UDP + H(+). It functions in the pathway protein modification; protein glycosylation. Functionally, catalyzes the initial reaction in O-linked oligosaccharide biosynthesis, the transfer of an N-acetyl-D-galactosamine residue to a serine or threonine residue on the protein receptor. It can both act as a peptide transferase that transfers GalNAc onto unmodified peptide substrates, and as a glycopeptide transferase that requires the prior addition of a GalNAc on a peptide before adding additional GalNAc moieties. Prefers both EA2 and the diglycosylated Muc5AC-3/13 as substrates, albeit at very low levels fro Muc5AC-3/13. The chain is Polypeptide N-acetylgalactosaminyltransferase 8 from Drosophila melanogaster (Fruit fly).